A 74-amino-acid chain; its full sequence is Large ribosomal subunit protein uL29 (74 aa).

Belongs to the universal ribosomal protein uL29 family.

The sequence is that of Large ribosomal subunit protein uL29 from Streptomyces avermitilis (strain ATCC 31267 / DSM 46492 / JCM 5070 / NBRC 14893 / NCIMB 12804 / NRRL 8165 / MA-4680).